Consider the following 173-residue polypeptide: Transcriptional repressor NrdR (173 aa).

A zinc finger lies at 3–34; the sequence is CPYCGSLDTQVKDSRPTEDNTAIRRRRVCPDC. The 91-residue stretch at 49-139 folds into the ATP-cone domain; that stretch reads LMVVKRSGRR…VYRNFREARD (91 aa).

This sequence belongs to the NrdR family. It depends on Zn(2+) as a cofactor.

Its function is as follows. Negatively regulates transcription of bacterial ribonucleotide reductase nrd genes and operons by binding to NrdR-boxes. The polypeptide is Transcriptional repressor NrdR (Azorhizobium caulinodans (strain ATCC 43989 / DSM 5975 / JCM 20966 / LMG 6465 / NBRC 14845 / NCIMB 13405 / ORS 571)).